We begin with the raw amino-acid sequence, 42 residues long: Photosystem I reaction center subunit IX (42 aa).

Residues 7–27 form a helical membrane-spanning segment; it reads YLSTAPVLAAVWFTVLAGILI.

This sequence belongs to the PsaJ family.

It is found in the plastid. It localises to the chloroplast thylakoid membrane. May help in the organization of the PsaE and PsaF subunits. The chain is Photosystem I reaction center subunit IX from Ostreococcus tauri.